A 182-amino-acid polypeptide reads, in one-letter code: Ribulose bisphosphate carboxylase small subunit, chloroplastic 4 (182 aa).

A chloroplast-targeting transit peptide spans 1–41 (MAATMMNKTVVLSKGCTKPSAVPKVSINRKGFLNTAMNKKR).

The protein belongs to the RuBisCO small chain family. In terms of assembly, heterohexadecamer of 8 large and 8 small subunits.

The protein localises to the plastid. It localises to the chloroplast. RuBisCO catalyzes two reactions: the carboxylation of D-ribulose 1,5-bisphosphate, the primary event in carbon dioxide fixation, as well as the oxidative fragmentation of the pentose substrate. Both reactions occur simultaneously and in competition at the same active site. Although the small subunit is not catalytic it is essential for maximal activity. This Acetabularia peniculus (Green alga) protein is Ribulose bisphosphate carboxylase small subunit, chloroplastic 4.